The primary structure comprises 148 residues: Putative cyclin-dependent kinase inhibitor SPL2 (148 aa).

Ser-59 and Ser-86 each carry phosphoserine.

It localises to the cytoplasmic granule. Its subcellular location is the cytoplasm. In terms of biological role, putative cyclin-dependent kinase (CDK) inhibitor necessary and sufficient for PHO pathway-dependent down-regulation of low-affinity phosphate transport. The sequence is that of Putative cyclin-dependent kinase inhibitor SPL2 (SPL2) from Saccharomyces cerevisiae (strain ATCC 204508 / S288c) (Baker's yeast).